Here is a 92-residue protein sequence, read N- to C-terminus: Large ribosomal subunit protein uL23c (92 aa).

The protein belongs to the universal ribosomal protein uL23 family. Part of the 50S ribosomal subunit.

It localises to the plastid. The protein resides in the chloroplast. Its function is as follows. Binds to 23S rRNA. This Nephroselmis olivacea (Green alga) protein is Large ribosomal subunit protein uL23c (rpl23).